Here is a 171-residue protein sequence, read N- to C-terminus: Crossover junction endodeoxyribonuclease RuvC (171 aa).

Residues aspartate 12, glutamate 72, and aspartate 144 contribute to the active site. The Mg(2+) site is built by aspartate 12, glutamate 72, and aspartate 144.

This sequence belongs to the RuvC family. In terms of assembly, homodimer which binds Holliday junction (HJ) DNA. The HJ becomes 2-fold symmetrical on binding to RuvC with unstacked arms; it has a different conformation from HJ DNA in complex with RuvA. In the full resolvosome a probable DNA-RuvA(4)-RuvB(12)-RuvC(2) complex forms which resolves the HJ. The cofactor is Mg(2+).

It is found in the cytoplasm. It catalyses the reaction Endonucleolytic cleavage at a junction such as a reciprocal single-stranded crossover between two homologous DNA duplexes (Holliday junction).. In terms of biological role, the RuvA-RuvB-RuvC complex processes Holliday junction (HJ) DNA during genetic recombination and DNA repair. Endonuclease that resolves HJ intermediates. Cleaves cruciform DNA by making single-stranded nicks across the HJ at symmetrical positions within the homologous arms, yielding a 5'-phosphate and a 3'-hydroxyl group; requires a central core of homology in the junction. The consensus cleavage sequence is 5'-(A/T)TT(C/G)-3'. Cleavage occurs on the 3'-side of the TT dinucleotide at the point of strand exchange. HJ branch migration catalyzed by RuvA-RuvB allows RuvC to scan DNA until it finds its consensus sequence, where it cleaves and resolves the cruciform DNA. The polypeptide is Crossover junction endodeoxyribonuclease RuvC (Afipia carboxidovorans (strain ATCC 49405 / DSM 1227 / KCTC 32145 / OM5) (Oligotropha carboxidovorans)).